Reading from the N-terminus, the 142-residue chain is Hemoglobin subunit alpha-1 (142 aa).

The region spanning 2–142 is the Globin domain; that stretch reads VLSPADKTNV…VSTVLTSKYR (141 aa). Residue His59 coordinates O2. His88 provides a ligand contact to heme b.

Belongs to the globin family. As to quaternary structure, heterotetramer of two alpha chains and two beta chains. Red blood cells.

Its function is as follows. Involved in oxygen transport from the lung to the various peripheral tissues. Hemopressin acts as an antagonist peptide of the cannabinoid receptor CNR1. Hemopressin-binding efficiently blocks cannabinoid receptor CNR1 and subsequent signaling. This Hylobates lar (Lar gibbon) protein is Hemoglobin subunit alpha-1 (HBA1).